Here is a 210-residue protein sequence, read N- to C-terminus: Ras-related protein Rab-8 (210 aa).

15–22 (GDSGVGKT) is a binding site for GTP. The Effector region signature appears at 37–45 (FISTIGIDF). GTP is bound by residues 63 to 67 (DTAGQ) and 121 to 124 (NKCD). Cysteine 207 carries the cysteine methyl ester modification. Cysteine 207 carries S-geranylgeranyl cysteine lipidation. The propeptide at 208–210 (SLL) is removed in mature form.

It belongs to the small GTPase superfamily. Rab family.

It localises to the cell membrane. The polypeptide is Ras-related protein Rab-8 (Diplobatis ommata (Ocellated electric ray)).